The primary structure comprises 246 residues: 1-(5-phosphoribosyl)-5-[(5-phosphoribosylamino)methylideneamino] imidazole-4-carboxamide isomerase (246 aa).

Catalysis depends on aspartate 8, which acts as the Proton acceptor. The active-site Proton donor is the aspartate 131.

Belongs to the HisA/HisF family.

It localises to the cytoplasm. The catalysed reaction is 1-(5-phospho-beta-D-ribosyl)-5-[(5-phospho-beta-D-ribosylamino)methylideneamino]imidazole-4-carboxamide = 5-[(5-phospho-1-deoxy-D-ribulos-1-ylimino)methylamino]-1-(5-phospho-beta-D-ribosyl)imidazole-4-carboxamide. Its pathway is amino-acid biosynthesis; L-histidine biosynthesis; L-histidine from 5-phospho-alpha-D-ribose 1-diphosphate: step 4/9. This Polaromonas sp. (strain JS666 / ATCC BAA-500) protein is 1-(5-phosphoribosyl)-5-[(5-phosphoribosylamino)methylideneamino] imidazole-4-carboxamide isomerase.